Here is a 423-residue protein sequence, read N- to C-terminus: COP9 signalosome complex subunit 3 (423 aa).

A PCI domain is found at 197 to 365; the sequence is NFERALYFYE…GMVCFHDNPE (169 aa). The segment at 403–423 is disordered; that stretch reads FVQKSMGSQDDDSGSKPSSYS.

Belongs to the CSN3 family. As to quaternary structure, component of the CSN complex, probably composed of cops1, cops2, cops3, cops4, cops5, cops6, cops7, cops8 and cops9.

It is found in the cytoplasm. The protein resides in the nucleus. In terms of biological role, component of the COP9 signalosome complex (CSN), a complex involved in various cellular and developmental processes. The CSN complex is an essential regulator of the ubiquitin (Ubl) conjugation pathway by mediating the deneddylation of the cullin subunits of E3 ligase complexes, leading to modify the Ubl ligase activity. The sequence is that of COP9 signalosome complex subunit 3 (cops3) from Xenopus tropicalis (Western clawed frog).